The following is a 695-amino-acid chain: Probable serine/threonine-protein kinase abkD (695 aa).

The span at 105–119 (TTKPQPCQAKPPSSK) shows a compositional bias: polar residues. The segment at 105–149 (TTKPQPCQAKPPSSKQQQQQQQQQQQQQQQQQQQQSKKKTSKDRL) is disordered. Residues 118–150 (SKQQQQQQQQQQQQQQQQQQQQSKKKTSKDRLR) are a coiled coil. Residues 120-139 (QQQQQQQQQQQQQQQQQQQQ) are compositionally biased toward low complexity. The helical transmembrane segment at 177-193 (TIASILAAIALIIYSYE) threads the bilayer. The Protein kinase domain occupies 317-695 (DFDRLPIAAA…LIKDQMKKLG (379 aa)). Residues 323-331 (IAAASLAQV) and lysine 345 contribute to the ATP site. Aspartate 477 (proton acceptor) is an active-site residue.

Belongs to the protein kinase superfamily. ADCK protein kinase family.

The protein resides in the membrane. The chain is Probable serine/threonine-protein kinase abkD (abkD) from Dictyostelium discoideum (Social amoeba).